We begin with the raw amino-acid sequence, 207 residues long: Macrophage immunometabolism regulator (207 aa).

At Met1 the chain carries N-acetylmethionine. The segment at 1 to 41 (MEVDINGDSRSTLTTLPLPVAEGSSPGKAEAEKPRCSSTPC) is disordered. Residues Ser25 and Ser167 each carry the phosphoserine modification.

Belongs to the UNC119-binding protein family. In terms of assembly, interacts with UNC119 and UNC119B; interaction preferentially takes place when UNC119 and UNC119B are unliganded with myristoylated proteins. As to expression, highly expressed in photoreceptors.

It is found in the cytoplasm. The protein localises to the cell projection. Its subcellular location is the cilium. In terms of biological role, regulates the macrophage function, by enhancing the resolution of inflammation and wound repair functions mediated by M2 macrophages. The regulation of macrophage function is, due at least in part, to its ability to inhibit glycolysis. May also play a role in trafficking of proteins via its interaction with UNC119 and UNC119B cargo adapters: may help the release of UNC119 and UNC119B cargo or the recycling of UNC119 and UNC119B. May play a role in ciliary membrane localization via its interaction with UNC119B and protein transport into photoreceptor cells. This chain is Macrophage immunometabolism regulator, found in Mus musculus (Mouse).